Here is a 453-residue protein sequence, read N- to C-terminus: Bifunctional protein GlmU (453 aa).

The tract at residues 1–226 is pyrophosphorylase; the sequence is MKFSAVILAA…AIEVEGVNDR (226 aa). UDP-N-acetyl-alpha-D-glucosamine is bound by residues 8 to 11, Lys-22, Gln-73, 78 to 79, 100 to 102, Gly-137, Glu-151, Asn-166, and Asn-224; these read LAAG, GT, and YGD. Asp-102 is a Mg(2+) binding site. A Mg(2+)-binding site is contributed by Asn-224. A linker region spans residues 227 to 247; it reads AQLARLERAFQSMQAQKLLEQ. The segment at 248 to 453 is N-acetyltransferase; it reads GVMLRDPARF…TGWQRPVKQK (206 aa). Positions 330 and 348 each coordinate UDP-N-acetyl-alpha-D-glucosamine. The active-site Proton acceptor is His-360. UDP-N-acetyl-alpha-D-glucosamine contacts are provided by Tyr-363 and Asn-374. Acetyl-CoA is bound by residues Ala-377, 383–384, Ser-402, Ala-420, and Arg-437; that span reads NY.

In the N-terminal section; belongs to the N-acetylglucosamine-1-phosphate uridyltransferase family. The protein in the C-terminal section; belongs to the transferase hexapeptide repeat family. In terms of assembly, homotrimer. The cofactor is Mg(2+).

Its subcellular location is the cytoplasm. The enzyme catalyses alpha-D-glucosamine 1-phosphate + acetyl-CoA = N-acetyl-alpha-D-glucosamine 1-phosphate + CoA + H(+). It carries out the reaction N-acetyl-alpha-D-glucosamine 1-phosphate + UTP + H(+) = UDP-N-acetyl-alpha-D-glucosamine + diphosphate. It functions in the pathway nucleotide-sugar biosynthesis; UDP-N-acetyl-alpha-D-glucosamine biosynthesis; N-acetyl-alpha-D-glucosamine 1-phosphate from alpha-D-glucosamine 6-phosphate (route II): step 2/2. It participates in nucleotide-sugar biosynthesis; UDP-N-acetyl-alpha-D-glucosamine biosynthesis; UDP-N-acetyl-alpha-D-glucosamine from N-acetyl-alpha-D-glucosamine 1-phosphate: step 1/1. Its pathway is bacterial outer membrane biogenesis; LPS lipid A biosynthesis. In terms of biological role, catalyzes the last two sequential reactions in the de novo biosynthetic pathway for UDP-N-acetylglucosamine (UDP-GlcNAc). The C-terminal domain catalyzes the transfer of acetyl group from acetyl coenzyme A to glucosamine-1-phosphate (GlcN-1-P) to produce N-acetylglucosamine-1-phosphate (GlcNAc-1-P), which is converted into UDP-GlcNAc by the transfer of uridine 5-monophosphate (from uridine 5-triphosphate), a reaction catalyzed by the N-terminal domain. The polypeptide is Bifunctional protein GlmU (Vibrio campbellii (strain ATCC BAA-1116)).